The primary structure comprises 1169 residues: Zinc finger protein 862 (1169 aa).

The KRAB 1 domain occupies 11–77; it reads VTFDDITVYL…SVQGQRSLLE (67 aa). A TTF-type 1 zinc finger spans residues 135–218; it reads KPRSIQKSWF…RDPIWAARFR (84 aa). Residues 333-404 form the KRAB 2 domain; that stretch reads VVFEDVAVYF…DPNGPKWGKG (72 aa). Residues 461 to 544 form a TTF-type 2 zinc finger; the sequence is RPRSIQRSWF…KEDTPHTALV (84 aa).

Its subcellular location is the nucleus. Its function is as follows. May be involved in transcriptional regulation. The protein is Zinc finger protein 862 (ZNF862) of Homo sapiens (Human).